We begin with the raw amino-acid sequence, 66 residues long: Large ribosomal subunit protein uL29 (66 aa).

The protein belongs to the universal ribosomal protein uL29 family.

The chain is Large ribosomal subunit protein uL29 from Sinorhizobium fredii (strain NBRC 101917 / NGR234).